The chain runs to 574 residues: Proline--tRNA ligase (574 aa).

The protein belongs to the class-II aminoacyl-tRNA synthetase family. ProS type 1 subfamily. As to quaternary structure, homodimer.

The protein resides in the cytoplasm. The catalysed reaction is tRNA(Pro) + L-proline + ATP = L-prolyl-tRNA(Pro) + AMP + diphosphate. Its function is as follows. Catalyzes the attachment of proline to tRNA(Pro) in a two-step reaction: proline is first activated by ATP to form Pro-AMP and then transferred to the acceptor end of tRNA(Pro). As ProRS can inadvertently accommodate and process non-cognate amino acids such as alanine and cysteine, to avoid such errors it has two additional distinct editing activities against alanine. One activity is designated as 'pretransfer' editing and involves the tRNA(Pro)-independent hydrolysis of activated Ala-AMP. The other activity is designated 'posttransfer' editing and involves deacylation of mischarged Ala-tRNA(Pro). The misacylated Cys-tRNA(Pro) is not edited by ProRS. This Nitrosococcus oceani (strain ATCC 19707 / BCRC 17464 / JCM 30415 / NCIMB 11848 / C-107) protein is Proline--tRNA ligase.